A 376-amino-acid polypeptide reads, in one-letter code: Erythronate-4-phosphate dehydrogenase (376 aa).

Substrate-binding residues include S45 and T67. An NAD(+)-binding site is contributed by D147. Residue R209 is part of the active site. D233 is an NAD(+) binding site. Residue E238 is part of the active site. The active-site Proton donor is H255. Position 258 (G258) interacts with NAD(+). Y259 contacts substrate.

It belongs to the D-isomer specific 2-hydroxyacid dehydrogenase family. PdxB subfamily. In terms of assembly, homodimer.

The protein localises to the cytoplasm. The catalysed reaction is 4-phospho-D-erythronate + NAD(+) = (R)-3-hydroxy-2-oxo-4-phosphooxybutanoate + NADH + H(+). It functions in the pathway cofactor biosynthesis; pyridoxine 5'-phosphate biosynthesis; pyridoxine 5'-phosphate from D-erythrose 4-phosphate: step 2/5. Functionally, catalyzes the oxidation of erythronate-4-phosphate to 3-hydroxy-2-oxo-4-phosphonooxybutanoate. This Shewanella baltica (strain OS223) protein is Erythronate-4-phosphate dehydrogenase.